Reading from the N-terminus, the 691-residue chain is Protein 4.2 (691 aa).

The N-myristoyl glycine moiety is linked to residue glycine 2. A band 3 binding region spans residues 31 to 39 (LTLRRGQSF). A Phosphoserine modification is found at serine 248. Tyrosine 570 bears the Phosphotyrosine mark.

It belongs to the transglutaminase superfamily. Transglutaminase family. In terms of assembly, component of the ankyrin-1 complex in the erythrocyte, composed of ANK1, RHCE, RHAG, SLC4A1, EPB42, GYPA, GYPB and AQP1. Interacts with SLC4A1 (via the cytoplasmic domain); this interaction is mediated by the SLC4A1 Band 3-I dimer. Interacts with ANK1 (via ANK 1-13 repeats). Interacts with AQP1 (via the C-terminal).

The protein resides in the cell membrane. It is found in the cytoplasm. It localises to the cytoskeleton. In terms of biological role, component of the ankyrin-1 complex, a multiprotein complex involved in the stability and shape of the erythrocyte membrane. The sequence is that of Protein 4.2 from Mus musculus (Mouse).